We begin with the raw amino-acid sequence, 280 residues long: Hematopoietically-expressed homeobox protein HHEX homolog (280 aa).

2 disordered regions span residues 1-35 (MSTL…GLAP) and 221-280 (RRVK…EKEA). Positions 165-224 (RKGGQVRFSNDQTMELEKKFESQKYLSPPERKKLAKLLQLSERQVKTWFQNRRAKWRRVK) form a DNA-binding region, homeobox. The segment covering 232–252 (GEGDENSHEKPRDLDRDDFSR) has biased composition (basic and acidic residues).

The protein resides in the nucleus. Its function is as follows. Transcription factor that may play a central role in activating or maintaining gene expression in the vegetal pole. Part of a gene regulatory circuit with Erg and Tgif that operates early in mesoderm development. The chain is Hematopoietically-expressed homeobox protein HHEX homolog from Patiria miniata (Bat star).